The following is a 289-amino-acid chain: Glyceraldehyde-3-phosphate dehydrogenase (289 aa).

NAD(+) contacts are provided by D12 and R57. D-glyceraldehyde 3-phosphate is bound by residues 128-130, T159, 188-189, and R211; these read SCT and TG. C129 (nucleophile) is an active-site residue.

The protein belongs to the glyceraldehyde-3-phosphate dehydrogenase family. In terms of assembly, homotetramer.

The protein resides in the cytoplasm. It catalyses the reaction D-glyceraldehyde 3-phosphate + phosphate + NAD(+) = (2R)-3-phospho-glyceroyl phosphate + NADH + H(+). It functions in the pathway carbohydrate degradation; glycolysis; pyruvate from D-glyceraldehyde 3-phosphate: step 1/5. This is Glyceraldehyde-3-phosphate dehydrogenase (GPD) from Amanita muscaria (Fly agaric).